Consider the following 223-residue polypeptide: Adenylate kinase 4, mitochondrial (223 aa).

Position 15–20 (15–20 (GSGKGT)) interacts with a ribonucleoside 5'-triphosphate. An NMP region spans residues 35-64 (SSGHFLRENIKANTEVGDMAKQYIEKGLLV). AMP contacts are provided by serine 36 and arginine 41. Residue lysine 60 is modified to N6-succinyllysine. AMP-binding positions include 62 to 64 (LLV), 89 to 92 (GFPR), and glutamine 96. Residues 125–162 (RRWIHPPSGRVYNLDFNPPHVHGMDDVTGEPLVQQEDD) are LID. A ribonucleoside 5'-triphosphate contacts are provided by residues arginine 126 and 135 to 136 (VY). Arginine 170 serves as a coordination point for AMP. Lysine 175 carries the N6-acetyllysine modification. N6-acetyllysine; alternate is present on residues lysine 179 and lysine 186. N6-succinyllysine; alternate is present on residues lysine 179 and lysine 186. Threonine 199 is an a ribonucleoside 5'-triphosphate binding site.

This sequence belongs to the adenylate kinase family. AK3 subfamily. Monomer. Interacts with SLC25A5/ANT2.

The protein localises to the mitochondrion matrix. The catalysed reaction is a ribonucleoside 5'-phosphate + ATP = a ribonucleoside 5'-diphosphate + ADP. The enzyme catalyses AMP + ATP = 2 ADP. It catalyses the reaction GTP + AMP = GDP + ADP. It carries out the reaction CMP + ATP = CDP + ADP. The catalysed reaction is GTP + CMP = CDP + GDP. The enzyme catalyses dAMP + ATP = dADP + ADP. It catalyses the reaction dCMP + ATP = dCDP + ADP. It carries out the reaction a 2'-deoxyribonucleoside 5'-diphosphate + ATP = a 2'-deoxyribonucleoside 5'-triphosphate + ADP. The catalysed reaction is a ribonucleoside 5'-diphosphate + ATP = a ribonucleoside 5'-triphosphate + ADP. The enzyme catalyses GDP + ATP = GTP + ADP. It catalyses the reaction CDP + GTP = CTP + GDP. It carries out the reaction CDP + ATP = CTP + ADP. The catalysed reaction is UDP + ATP = UTP + ADP. The enzyme catalyses GTP + UDP = UTP + GDP. It catalyses the reaction dADP + GTP = dATP + GDP. It carries out the reaction dCDP + GTP = dCTP + GDP. The catalysed reaction is dCDP + ATP = dCTP + ADP. The enzyme catalyses dGDP + ATP = dGTP + ADP. It catalyses the reaction dTDP + GTP = dTTP + GDP. It carries out the reaction dTDP + ATP = dTTP + ADP. In terms of biological role, broad-specificity mitochondrial nucleoside phosphate kinase involved in cellular nucleotide homeostasis by catalyzing nucleoside-phosphate interconversions. Similar to other adenylate kinases, preferentially catalyzes the phosphorylation of the nucleoside monophosphate AMP with ATP as phosphate donor to produce ADP. Phosphorylates only AMP when using GTP as phosphate donor. In vitro, can also catalyze the phosphorylation of CMP, dAMP and dCMP and use GTP as an alternate phosphate donor. Moreover, exhibits a diphosphate kinase activity, producing ATP, CTP, GTP, UTP, TTP, dATP, dCTP and dGTP from the corresponding diphosphate substrates with either ATP or GTP as phosphate donors. Plays a role in controlling cellular ATP levels by regulating phosphorylation and activation of the energy sensor protein kinase AMPK. Plays a protective role in the cellular response to oxidative stress. This is Adenylate kinase 4, mitochondrial from Bos taurus (Bovine).